Reading from the N-terminus, the 788-residue chain is Bifunctional purine biosynthetic protein ADE1 (788 aa).

The segment at 1–430 (MEPIIALLIG…DIAHHALNPK (430 aa)) is GARS. In terms of domain architecture, ATP-grasp spans 115–321 (KDFMHRNNIP…LAEIILACVN (207 aa)). 141-202 (LDTCTFDVVI…EELLEGEELS (62 aa)) lines the ATP pocket. Glu-291 and Asn-293 together coordinate Mg(2+). Residues 437 to 769 (LTYENSGVSV…TVYRIGQLVD (333 aa)) are AIRS.

In the N-terminal section; belongs to the GARS family. This sequence in the C-terminal section; belongs to the AIR synthase family. Mg(2+) is required as a cofactor. The cofactor is Mn(2+).

Its subcellular location is the cytoplasm. It is found in the cytosol. It catalyses the reaction 5-phospho-beta-D-ribosylamine + glycine + ATP = N(1)-(5-phospho-beta-D-ribosyl)glycinamide + ADP + phosphate + H(+). The catalysed reaction is 2-formamido-N(1)-(5-O-phospho-beta-D-ribosyl)acetamidine + ATP = 5-amino-1-(5-phospho-beta-D-ribosyl)imidazole + ADP + phosphate + H(+). The protein operates within purine metabolism; IMP biosynthesis via de novo pathway; 5-amino-1-(5-phospho-D-ribosyl)imidazole from N(2)-formyl-N(1)-(5-phospho-D-ribosyl)glycinamide: step 2/2. Its pathway is purine metabolism; IMP biosynthesis via de novo pathway; N(1)-(5-phospho-D-ribosyl)glycinamide from 5-phospho-alpha-D-ribose 1-diphosphate: step 2/2. Functionally, catalyzes the second and fifth step in the 'de novo' purine biosynthesis pathway; contains phosphoribosylamine--glycine ligase (GARS) and phosphoribosylformylglycinamidine cyclo-ligase (AIRS) activities. The protein is Bifunctional purine biosynthetic protein ADE1 of Schizosaccharomyces pombe (strain 972 / ATCC 24843) (Fission yeast).